The primary structure comprises 147 residues: Hemoglobin subunit beta (147 aa).

Ser-2 carries the N-acetylserine modification. The Globin domain occupies 3 to 147 (FLSAEEKNLV…VASALAHRYH (145 aa)). Ser-45 bears the Phosphoserine mark. Lys-60 carries the N6-acetyllysine modification. Residue His-64 participates in heme b binding. At Lys-83 the chain carries N6-acetyllysine. A heme b-binding site is contributed by His-93. Cys-94 is subject to S-nitrosocysteine.

It belongs to the globin family. As to quaternary structure, heterotetramer of two alpha chains and two beta chains. As to expression, red blood cells.

Involved in oxygen transport from the lung to the various peripheral tissues. The chain is Hemoglobin subunit beta (HBB) from Panthera pardus orientalis (Amur leopard).